A 125-amino-acid polypeptide reads, in one-letter code: Holo-[acyl-carrier-protein] synthase (125 aa).

2 residues coordinate Mg(2+): D8 and E57.

Belongs to the P-Pant transferase superfamily. AcpS family. Mg(2+) is required as a cofactor.

Its subcellular location is the cytoplasm. It carries out the reaction apo-[ACP] + CoA = holo-[ACP] + adenosine 3',5'-bisphosphate + H(+). Its function is as follows. Transfers the 4'-phosphopantetheine moiety from coenzyme A to a Ser of acyl-carrier-protein. This Neisseria meningitidis serogroup C (strain 053442) protein is Holo-[acyl-carrier-protein] synthase.